A 426-amino-acid polypeptide reads, in one-letter code: D-tagatose-1,6-bisphosphate aldolase subunit KbaZ (426 aa).

It belongs to the GatZ/KbaZ family. KbaZ subfamily. Forms a complex with KbaY.

Its pathway is carbohydrate metabolism; D-tagatose 6-phosphate degradation; D-glyceraldehyde 3-phosphate and glycerone phosphate from D-tagatose 6-phosphate: step 2/2. Its function is as follows. Component of the tagatose-1,6-bisphosphate aldolase KbaYZ that is required for full activity and stability of the Y subunit. Could have a chaperone-like function for the proper and stable folding of KbaY. When expressed alone, KbaZ does not show any aldolase activity. This Escherichia coli O1:K1 / APEC protein is D-tagatose-1,6-bisphosphate aldolase subunit KbaZ.